A 110-amino-acid chain; its full sequence is Phosphoribosyl-ATP pyrophosphatase (110 aa).

This sequence belongs to the PRA-PH family.

It is found in the cytoplasm. The catalysed reaction is 1-(5-phospho-beta-D-ribosyl)-ATP + H2O = 1-(5-phospho-beta-D-ribosyl)-5'-AMP + diphosphate + H(+). It functions in the pathway amino-acid biosynthesis; L-histidine biosynthesis; L-histidine from 5-phospho-alpha-D-ribose 1-diphosphate: step 2/9. This chain is Phosphoribosyl-ATP pyrophosphatase, found in Pseudomonas fluorescens (strain ATCC BAA-477 / NRRL B-23932 / Pf-5).